We begin with the raw amino-acid sequence, 579 residues long: MQLLKQLKWYFIQEYKNYTIAIFLLISISILQLYPPKLIGMLIDISIRKQTQKAPILPLILIILFISIIIYILRYMWRLFLFGASYKLAIKLRIEIYNYLCQQKNDFYLKHKTGDLIARITNDVDKVVFAAGEGVLTLVDSLIMGVSVIIVMITQISWKLTIISLIPMPIMAIIIKRFGKKLYSSYHDAQTTFSHLNNYAQENLNNIHMIKAFGLENYYSKKFLKIAHKTRKKNIKIAKIDSKFNPIIHLFISISHLLAITIGSYMITYNEISTGELMSFILYLGLIIWPMLAFAWMFNIIERGSASWDRIKSMINNNLFIHKKKYKNISNIPGILEVKINYFKYSKSNKTILKNINFKIRPGQILGICGPTGSGKSTLLKLIQRQIELYDGKISYHSIPITQFNIVEWRKKMSIVNQTTFLFSDTIANNIKLGKPYASQKEIEQATTFSDLHNDIMTFPQGYNTQVGERGIMLSGGQKQRISIARALLLKSEILILDNALSSVDNKTEINILENLKTWKKNKNTIIMCTHRLSSLINSDLIIVIENGSITQIGKHKLLIQNLKQWYGKTYLHQKLSNH.

The ABC transmembrane type-1 domain maps to 18-303 (YTIAIFLLIS…FAWMFNIIER (286 aa)). The next 6 membrane-spanning stretches (helical) occupy residues 20-40 (IAIF…KLIG), 53-73 (KAPI…IYIL), 134-154 (GVLT…VMIT), 155-175 (QISW…AIII), 247-267 (IIHL…SYMI), and 281-301 (ILYL…FNII). The ABC transporter domain occupies 338–572 (VKINYFKYSK…LKQWYGKTYL (235 aa)). ATP is bound at residue 370–377 (GPTGSGKS).

The protein belongs to the ABC transporter superfamily. Drug exporter-2 (TC 3.A.1.117) family.

It localises to the cell membrane. The enzyme catalyses ATP + H2O + xenobioticSide 1 = ADP + phosphate + xenobioticSide 2.. The sequence is that of Multidrug resistance-like ATP-binding protein MdlA (mdlA) from Buchnera aphidicola subsp. Baizongia pistaciae (strain Bp).